The chain runs to 23 residues: Defensin D4 (23 aa).

This sequence belongs to the DEFL family. Group IV subfamily. In terms of tissue distribution, distributed in the epidermal cell layer of leaves and in the subepidermal layer region of stems. Not in roots.

The protein resides in the secreted. It is found in the cell wall. Its function is as follows. Antimicrobial peptide. Active against Fusarium spp., Gram-positive and Gram-negative bacterial pathogens. The sequence is that of Defensin D4 from Spinacia oleracea (Spinach).